Consider the following 385-residue polypeptide: tRNA-specific 2-thiouridylase MnmA (385 aa).

ATP is bound by residues glycine 29–serine 36 and leucine 55. The Nucleophile role is filled by cysteine 116. A disulfide bridge connects residues cysteine 116 and cysteine 225. Glycine 141 lines the ATP pocket. An interaction with tRNA region spans residues lysine 175–glutamine 177. The active-site Cysteine persulfide intermediate is the cysteine 225. Residues arginine 330–tyrosine 331 form an interaction with tRNA region.

The protein belongs to the MnmA/TRMU family.

The protein resides in the cytoplasm. The catalysed reaction is S-sulfanyl-L-cysteinyl-[protein] + uridine(34) in tRNA + AH2 + ATP = 2-thiouridine(34) in tRNA + L-cysteinyl-[protein] + A + AMP + diphosphate + H(+). In terms of biological role, catalyzes the 2-thiolation of uridine at the wobble position (U34) of tRNA, leading to the formation of s(2)U34. This is tRNA-specific 2-thiouridylase MnmA from Prochlorococcus marinus (strain MIT 9301).